The following is a 252-amino-acid chain: Thiazole synthase (252 aa).

Lys-95 functions as the Schiff-base intermediate with DXP in the catalytic mechanism. Residues Gly-156, 182–183 (AG), and 204–205 (NT) each bind 1-deoxy-D-xylulose 5-phosphate.

This sequence belongs to the ThiG family. As to quaternary structure, homotetramer. Forms heterodimers with either ThiH or ThiS.

Its subcellular location is the cytoplasm. The catalysed reaction is [ThiS sulfur-carrier protein]-C-terminal-Gly-aminoethanethioate + 2-iminoacetate + 1-deoxy-D-xylulose 5-phosphate = [ThiS sulfur-carrier protein]-C-terminal Gly-Gly + 2-[(2R,5Z)-2-carboxy-4-methylthiazol-5(2H)-ylidene]ethyl phosphate + 2 H2O + H(+). It functions in the pathway cofactor biosynthesis; thiamine diphosphate biosynthesis. Catalyzes the rearrangement of 1-deoxy-D-xylulose 5-phosphate (DXP) to produce the thiazole phosphate moiety of thiamine. Sulfur is provided by the thiocarboxylate moiety of the carrier protein ThiS. In vitro, sulfur can be provided by H(2)S. The polypeptide is Thiazole synthase (Shewanella sp. (strain ANA-3)).